We begin with the raw amino-acid sequence, 127 residues long: Two-component response regulator ORR41 (127 aa).

Positions 7–125 (RVLLVEDEEI…KLGVILAKFR (119 aa)) constitute a Response regulatory domain. Residue Asp60 is modified to 4-aspartylphosphate.

Belongs to the ARR family. Type-C subfamily. Post-translationally, two-component system major event consists of a His-to-Asp phosphorelay between a sensor histidine kinase (HK) and a response regulator (RR). In plants, the His-to-Asp phosphorelay involves an additional intermediate named Histidine-containing phosphotransfer protein (HPt). This multistep phosphorelay consists of a His-Asp-His-Asp sequential transfer of a phosphate group between first a His and an Asp of the HK protein, followed by the transfer to a conserved His of the HPt protein and finally the transfer to an Asp in the receiver domain of the RR protein.

Functions as a response regulator involved in His-to-Asp phosphorelay signal transduction system. Phosphorylation of the Asp residue in the receiver domain activates the ability of the protein to promote the transcription of target genes. May directly activate some type-A response regulators in response to cytokinins. The polypeptide is Two-component response regulator ORR41 (Oryza sativa subsp. japonica (Rice)).